The chain runs to 297 residues: MSNWLVDKLIPSIMRSEVKKSSVPEGLWHKCPACEAVLYRPELEKTLDVCPKCNHHMRIGARQRIDIFLDAEGRAELGAELEPVDRLKFRDGKKYKDRLVGAQKQTGEKDALISMSGTLMGMPIVVSAFEFSFMGGSMGAVVGERFVRAANHALENRCPMICFSASGGARMQEALISLMQMAKTSAVLARLREEGIPFISVLTDPVYGGVSASLAMLGDVIVGEPKALIGFAGPRVIEQTVREKLPEGFQRSEFLLEHGAIDLIISRGELRPRLARLLAQMTGQETPEQAREAAAVA.

Residues 27–296 (LWHKCPACEA…PEQAREAAAV (270 aa)) enclose the CoA carboxyltransferase N-terminal domain. Zn(2+)-binding residues include C31, C34, C50, and C53. The segment at 31 to 53 (CPACEAVLYRPELEKTLDVCPKC) adopts a C4-type zinc-finger fold.

This sequence belongs to the AccD/PCCB family. Acetyl-CoA carboxylase is a heterohexamer composed of biotin carboxyl carrier protein (AccB), biotin carboxylase (AccC) and two subunits each of ACCase subunit alpha (AccA) and ACCase subunit beta (AccD). Zn(2+) is required as a cofactor.

It is found in the cytoplasm. The enzyme catalyses N(6)-carboxybiotinyl-L-lysyl-[protein] + acetyl-CoA = N(6)-biotinyl-L-lysyl-[protein] + malonyl-CoA. It functions in the pathway lipid metabolism; malonyl-CoA biosynthesis; malonyl-CoA from acetyl-CoA: step 1/1. In terms of biological role, component of the acetyl coenzyme A carboxylase (ACC) complex. Biotin carboxylase (BC) catalyzes the carboxylation of biotin on its carrier protein (BCCP) and then the CO(2) group is transferred by the transcarboxylase to acetyl-CoA to form malonyl-CoA. The chain is Acetyl-coenzyme A carboxylase carboxyl transferase subunit beta from Pseudomonas putida (strain W619).